Consider the following 478-residue polypeptide: MAKDKKFVEDITPMDEDFAQWYTDIVKKAELADYSSIKGCMIIRPNGYAIWENIQKYVDTKLKEYGHENVSMPIFIPENLLQKEKDHVEGFAPEVAWVTHGGDDELAERLCVRPTSETLFCEHYAKIVQSYKDLPKLYNQWCSVVRWEKTTRPFLRTTEFLWQEGHTIHETKEEAESHSLKILNMYSRLCEDMLAMPVVMGKKTEKEKFAGADDTYTIESLMHDGKALQAGTSHYLGQNFSKAFAIQFSDRNGKLEYPHYTTWAVTTRLIGAIIMVHGDDSGLKLPPRIAPTQAVIIPVAQHKEGVLEKAKELKEKLAKVVRVKLDDSDKMPGWKYSEYEMKGIPLRIEIGPKDIEKNQAVLVRRDNREKTIVSLDEIEIKVQEMLDTIHNSMLEEARKARDEKTYVATTMEEFEDIIENKPGFIKAMWCGDRACEDKIREVTGATSRCMPFEQEVVSDTCVCCGKKAKNLIYWGRAY.

The protein belongs to the class-II aminoacyl-tRNA synthetase family. ProS type 3 subfamily. Homodimer.

Its subcellular location is the cytoplasm. It carries out the reaction tRNA(Pro) + L-proline + ATP = L-prolyl-tRNA(Pro) + AMP + diphosphate. Catalyzes the attachment of proline to tRNA(Pro) in a two-step reaction: proline is first activated by ATP to form Pro-AMP and then transferred to the acceptor end of tRNA(Pro). The polypeptide is Proline--tRNA ligase (Clostridium botulinum (strain Loch Maree / Type A3)).